We begin with the raw amino-acid sequence, 267 residues long: 2-keto-3-deoxy-L-rhamnonate aldolase (267 aa).

The active-site Proton acceptor is the H49. Q151 is a substrate binding site. Mg(2+) is bound at residue E153. Residues A178 and D179 each coordinate substrate. D179 is a binding site for Mg(2+).

Belongs to the HpcH/HpaI aldolase family. KDR aldolase subfamily. Homohexamer. Requires Mg(2+) as cofactor. It depends on Ni(2+) as a cofactor.

The enzyme catalyses 2-dehydro-3-deoxy-L-rhamnonate = (S)-lactaldehyde + pyruvate. It catalyses the reaction D-glyceraldehyde + 3-hydroxypyruvate = (3R,4S,5R)-3,4,5,6-tetrahydroxy-2-oxohexanoate. The catalysed reaction is D-glyceraldehyde + 3-hydroxypyruvate = 2-dehydro-D-gluconate. It carries out the reaction D-glyceraldehyde + 3-hydroxypyruvate = 2-dehydro-D-galactonate. The enzyme catalyses D-glyceraldehyde + pyruvate = 2-dehydro-3-deoxy-L-galactonate. It catalyses the reaction 2-dehydro-3-deoxy-D-gluconate = D-glyceraldehyde + pyruvate. In terms of biological role, catalyzes the reversible retro-aldol cleavage of 2-keto-3-deoxy-L-rhamnonate (KDR) to pyruvate and lactaldehyde. 2-keto-3-deoxy-L-mannonate, 2-keto-3-deoxy-L-lyxonate and 4-hydroxy-2-ketoheptane-1,7-dioate (HKHD) are also reasonably good substrates, although 2-keto-3-deoxy-L-rhamnonate is likely to be the physiological substrate. In vitro, can catalyze the aldolisation reaction between hydroxypyruvate (HPA) or pyruvate (PA) and D-glyceraldehyde (D-GA). The condensation of hydroxypyruvate and D-glyceraldehyde produces (3R,4S,5R)-3,4,5,6-tetrahydroxy-2-oxohexanoate as the major product, 2-dehydro-D-gluconate and 2-dehydro-D-galactonate. The condensation of pyruvate and D-glyceraldehyde produces 2-dehydro-3-deoxy-L-galactonate as the major product and 2-dehydro-3-deoxy-D-gluconate. The chain is 2-keto-3-deoxy-L-rhamnonate aldolase (rhmA) from Escherichia coli (strain K12).